The chain runs to 110 residues: Secreted RxLR effector protein 89 (110 aa).

The first 22 residues, 1 to 22 (MTSVVIVVSVAVLLGVLVITDS), serve as a signal peptide directing secretion. Asparagine 29 carries N-linked (GlcNAc...) asparagine glycosylation. The RxLR-dEER signature appears at 61 to 74 (RHLRTILQWWQERR).

The protein belongs to the RxLR effector family.

It is found in the secreted. Its subcellular location is the host nucleus. The protein resides in the host cytoplasm. Functionally, secreted effector that completely suppresses the host cell death induced by cell death-inducing proteins. In Plasmopara viticola (Downy mildew of grapevine), this protein is Secreted RxLR effector protein 89.